The following is a 221-amino-acid chain: Large ribosomal subunit protein uL3 (221 aa).

This sequence belongs to the universal ribosomal protein uL3 family. As to quaternary structure, part of the 50S ribosomal subunit. Forms a cluster with proteins L14 and L19.

One of the primary rRNA binding proteins, it binds directly near the 3'-end of the 23S rRNA, where it nucleates assembly of the 50S subunit. The protein is Large ribosomal subunit protein uL3 of Nocardia farcinica (strain IFM 10152).